The following is a 522-amino-acid chain: DNA-binding protein Ikaros (522 aa).

Disordered regions lie at residues 1–48 (MEME…HNNR) and 96–115 (AKVN…YSSA). C2H2-type zinc fingers lie at residues 125 to 147 (LKCD…KRSH), 153 to 175 (FQCT…IKLH), 181 to 203 (FKCH…LRTH), and 209 to 232 (HKCA…ERCH). A disordered region spans residues 379–406 (KSASSEKDGSPSHSGQDSTDTESNNEEK). 2 C2H2-type zinc fingers span residues 468 to 490 (YRCE…MGCH) and 496 to 520 (FECN…RGEH).

Belongs to the Ikaros C2H2-type zinc-finger protein family. As to expression, expression mainly limited to thymus, spleen and pronephros. Very low expression in liver. No expression in testis, brain, eye and muscle.

The protein localises to the nucleus. In terms of biological role, binds and activates the enhancer (delta-A element) of the CD3-delta gene. Functions in the specification and the maturation of the T-lymphocyte. Also interacts with a critical control element in the TDT (terminal deoxynucleotidyltransferase) promoter as well as with the promoters for other genes expressed during early stages of B- and T-cell development. Function is isoform-specific and is modulated by dominant-negative inactive isoforms. This is DNA-binding protein Ikaros (ikzf1) from Oncorhynchus mykiss (Rainbow trout).